A 461-amino-acid chain; its full sequence is Steroidogenic factor 1 (461 aa).

A DNA-binding region (nuclear receptor) is located at residues 10 to 85; the sequence is DELCPVCGDK…VGMRLEAVRA (76 aa). Residues 13-33 form an NR C4-type zinc finger; sequence CPVCGDKVSGYHYGLLTCESC. N6-acetyllysine occurs at positions 34, 38, and 72. An NR C4-type zinc finger spans residues 49-73; sequence CTESQSCKIDKTQRKRCPFCRFQKC. Lys119 is covalently cross-linked (Glycyl lysine isopeptide (Lys-Gly) (interchain with G-Cter in SUMO)). The disordered stretch occupies residues 119 to 157; that stretch reads KLETGPPMGVPPPPPPAPDYVLPPSLHGPEPKGLAAGPP. Over residues 126–136 the composition is skewed to pro residues; that stretch reads MGVPPPPPPAP. A Glycyl lysine isopeptide (Lys-Gly) (interchain with G-Cter in SUMO) cross-link involves residue Lys194. The residue at position 203 (Ser203) is a Phosphoserine; by CDK7. The NR LBD domain maps to 222 to 459; sequence NVPELILQLL…NLLIEMLQAK (238 aa). The tract at residues 230 to 461 is important for dimerization; sequence LLQLEPDEDQ…LIEMLQAKQT (232 aa). Residues Gly341, Tyr436, and Lys440 each contribute to the a 1,2-diacyl-sn-glycero-3-phosphocholine site. Residues Gly341, Tyr436, and Lys440 each contribute to the a 1,2-diacylglycero-3-phosphoethanolamine site.

Belongs to the nuclear hormone receptor family. NR5 subfamily. In terms of assembly, binds DNA as a monomer. Interacts with NR0B2 and PPARGC1A. Part of a complex consisting of SFPQ, NONO and NR5A1. Interacts with NCOA2. Interacts with DGKQ and CDK7. Binds to and activated by HIPK3. Acetylation stimulates the transcriptional activity. In terms of processing, sumoylation reduces CDK7-mediated phosphorylation on Ser-203. Post-translationally, phosphorylated on Ser-203 by CDK7. This phosphorylation promotes transcriptional activity. High expressed in the adrenal cortex, the ovary, the testis, and the spleen.

It is found in the nucleus. In terms of biological role, transcriptional activator. Essential for sexual differentiation and formation of the primary steroidogenic tissues. Binds to the Ad4 site found in the promoter region of steroidogenic P450 genes such as CYP11A, CYP11B and CYP21B. Also regulates the AMH/Muellerian inhibiting substance gene as well as the AHCH and STAR genes. 5'-YCAAGGYC-3' and 5'-RRAGGTCA-3' are the consensus sequences for the recognition by NR5A1. The SFPQ-NONO-NR5A1 complex binds to the CYP17 promoter and regulates basal and cAMP-dependent transcriptional activity. Binds phosphatidylcholine. Binds phospholipids with a phosphatidylinositol (PI) headgroup, in particular PI(3,4)P2 and PI(3,4,5)P3. Activated by the phosphorylation of NR5A1 by HIPK3 leading to increased steroidogenic gene expression upon cAMP signaling pathway stimulation. This Homo sapiens (Human) protein is Steroidogenic factor 1 (NR5A1).